The chain runs to 68 residues: Protein transport protein Sec61 subunit gamma (68 aa).

Residues 1 to 32 (MDQVMQFVEPSRQFVKDSIRLVKRCTKPDRKE) are Cytoplasmic-facing. Residues 33–61 (FQKVAMATAIGFAIMGFIGFFVKLIHIPI) form a helical membrane-spanning segment. Residues 62-68 (NNIIVGG) lie on the Extracellular side of the membrane.

The protein belongs to the SecE/SEC61-gamma family. In terms of assembly, the SEC61 channel-forming translocon complex consists of channel-forming core components SEC61A1, SEC61B and SEC61G and different auxiliary components such as SEC62 and SEC63. The SEC61 channel associates with the multi-pass translocon (MPT) complex.

It localises to the endoplasmic reticulum membrane. Its function is as follows. Component of SEC61 channel-forming translocon complex that mediates transport of signal peptide-containing precursor polypeptides across the endoplasmic reticulum (ER). Forms a ribosome receptor and a gated pore in the ER membrane, both functions required for cotranslational translocation of nascent polypeptides. The SEC61 channel is also involved in ER membrane insertion of transmembrane proteins: it mediates membrane insertion of the first few transmembrane segments of proteins, while insertion of subsequent transmembrane regions of multi-pass membrane proteins is mediated by the multi-pass translocon (MPT) complex. The chain is Protein transport protein Sec61 subunit gamma (sec61g) from Harpagifer antarcticus (Antarctic spiny plunderfish).